A 122-amino-acid polypeptide reads, in one-letter code: Large ribosomal subunit protein uL14c (122 aa).

The protein belongs to the universal ribosomal protein uL14 family. Part of the 50S ribosomal subunit.

Its subcellular location is the plastid. It localises to the chloroplast. Binds to 23S rRNA. This Pinus koraiensis (Korean pine) protein is Large ribosomal subunit protein uL14c.